Consider the following 518-residue polypeptide: Glutamate--cysteine ligase (518 aa).

It belongs to the glutamate--cysteine ligase type 1 family. Type 1 subfamily.

The catalysed reaction is L-cysteine + L-glutamate + ATP = gamma-L-glutamyl-L-cysteine + ADP + phosphate + H(+). Its pathway is sulfur metabolism; glutathione biosynthesis; glutathione from L-cysteine and L-glutamate: step 1/2. This is Glutamate--cysteine ligase from Klebsiella pneumoniae (strain 342).